The primary structure comprises 606 residues: Pyruvate decarboxylase 2 (606 aa).

Substrate-binding residues include Asp-68 and His-155. The segment at 433–515 (DSWFNCQKLK…FLINNGGYTI (83 aa)) is thiamine pyrophosphate binding. 3 residues coordinate Mg(2+): Asp-483, Asn-510, and Gly-512. Glu-516 contacts substrate.

The protein belongs to the TPP enzyme family. Homotetramer. The cofactor is a metal cation. Thiamine diphosphate serves as cofactor.

The catalysed reaction is a 2-oxocarboxylate + H(+) = an aldehyde + CO2. This is Pyruvate decarboxylase 2 (PDC2) from Oryza sativa subsp. indica (Rice).